The primary structure comprises 282 residues: Pantothenate synthetase (282 aa).

32-39 (MGALHEGH) lines the ATP pocket. Catalysis depends on His-39, which acts as the Proton donor. (R)-pantoate is bound at residue Gln-63. Residue Gln-63 coordinates beta-alanine. Residue 149-152 (GEKD) participates in ATP binding. Gln-155 contributes to the (R)-pantoate binding site. ATP is bound by residues Val-178 and 186 to 189 (LSSR).

This sequence belongs to the pantothenate synthetase family. As to quaternary structure, homodimer.

The protein resides in the cytoplasm. It catalyses the reaction (R)-pantoate + beta-alanine + ATP = (R)-pantothenate + AMP + diphosphate + H(+). It participates in cofactor biosynthesis; (R)-pantothenate biosynthesis; (R)-pantothenate from (R)-pantoate and beta-alanine: step 1/1. In terms of biological role, catalyzes the condensation of pantoate with beta-alanine in an ATP-dependent reaction via a pantoyl-adenylate intermediate. This chain is Pantothenate synthetase, found in Paracoccus denitrificans (strain Pd 1222).